The chain runs to 500 residues: L-arabinose isomerase (500 aa).

Mn(2+)-binding residues include Glu-306, Glu-333, His-350, and His-450.

It belongs to the arabinose isomerase family. Homohexamer. Mn(2+) is required as a cofactor.

It carries out the reaction beta-L-arabinopyranose = L-ribulose. It participates in carbohydrate degradation; L-arabinose degradation via L-ribulose; D-xylulose 5-phosphate from L-arabinose (bacterial route): step 1/3. Its function is as follows. Catalyzes the conversion of L-arabinose to L-ribulose. In Salmonella enteritidis PT4 (strain P125109), this protein is L-arabinose isomerase.